We begin with the raw amino-acid sequence, 327 residues long: FERM domain-containing protein 6 (327 aa).

Residues 16–320 enclose the FERM domain; sequence RRVCIFLPND…NSHRLYMNLQ (305 aa).

It is found in the cytoplasm. It localises to the cell membrane. The polypeptide is FERM domain-containing protein 6 (Frmd6) (Rattus norvegicus (Rat)).